The following is a 311-amino-acid chain: tRNA-cytidine(32) 2-sulfurtransferase (311 aa).

A PP-loop motif motif is present at residues 47–52; the sequence is SGGKDS. The [4Fe-4S] cluster site is built by C122, C125, and C213.

It belongs to the TtcA family. Homodimer. It depends on Mg(2+) as a cofactor. [4Fe-4S] cluster serves as cofactor.

It is found in the cytoplasm. The enzyme catalyses cytidine(32) in tRNA + S-sulfanyl-L-cysteinyl-[cysteine desulfurase] + AH2 + ATP = 2-thiocytidine(32) in tRNA + L-cysteinyl-[cysteine desulfurase] + A + AMP + diphosphate + H(+). Its pathway is tRNA modification. Functionally, catalyzes the ATP-dependent 2-thiolation of cytidine in position 32 of tRNA, to form 2-thiocytidine (s(2)C32). The sulfur atoms are provided by the cysteine/cysteine desulfurase (IscS) system. The chain is tRNA-cytidine(32) 2-sulfurtransferase from Salmonella heidelberg (strain SL476).